We begin with the raw amino-acid sequence, 1406 residues long: DNA-directed RNA polymerase subunit beta' (1406 aa).

Cys-70, Cys-72, Cys-85, and Cys-88 together coordinate Zn(2+). Residues Asp-460, Asp-462, and Asp-464 each coordinate Mg(2+). Zn(2+) is bound by residues Cys-814, Cys-888, Cys-895, and Cys-898.

Belongs to the RNA polymerase beta' chain family. The RNAP catalytic core consists of 2 alpha, 1 beta, 1 beta' and 1 omega subunit. When a sigma factor is associated with the core the holoenzyme is formed, which can initiate transcription. Mg(2+) serves as cofactor. Requires Zn(2+) as cofactor.

The enzyme catalyses RNA(n) + a ribonucleoside 5'-triphosphate = RNA(n+1) + diphosphate. DNA-dependent RNA polymerase catalyzes the transcription of DNA into RNA using the four ribonucleoside triphosphates as substrates. This chain is DNA-directed RNA polymerase subunit beta', found in Photorhabdus laumondii subsp. laumondii (strain DSM 15139 / CIP 105565 / TT01) (Photorhabdus luminescens subsp. laumondii).